The sequence spans 580 residues: F-box only protein 24 (580 aa).

In terms of domain architecture, F-box spans 36 to 82 (PISIQLFPPELVEHIISFLPVRDLVALGQTCRYFHEVCDAEGVWRRI). Residues 376 to 425 (GRIFMQGNNRYGQLGTGDKMDRGEPTQVRYLQRPITLWCGLNHSLVLSQS) form an RCC1 repeat.

As to quaternary structure, directly interacts with SKP1 and CUL1.

In terms of biological role, substrate-recognition component of the SCF (SKP1-CUL1-F-box protein)-type E3 ubiquitin ligase complex. The protein is F-box only protein 24 (FBXO24) of Macaca fascicularis (Crab-eating macaque).